Consider the following 366-residue polypeptide: Septin-1 (366 aa).

The Septin-type G domain occupies 22 to 295; sequence KGFDFTLMVA…EGYRARCLQS (274 aa). Residues 32-39 form a G1 motif region; it reads GESGLGKS. Residues 32–39, T66, G92, and 171–179 each bind GTP; these read GESGLGKS and KADALMPRE. The interval 89–92 is G3 motif; the sequence is DTPG. Residues 170–173 form a G4 motif region; sequence GKAD. The residue at position 206 (S206) is a Phosphoserine. The GTP site is built by G229 and R244. S247 bears the Phosphoserine mark. T250 is modified (phosphothreonine). A phosphoserine; by AURKB mark is found at S306 and S314. A disordered region spans residues 347 to 366; it reads EKMQAQMQQSQAQGEQSDVL. Residues 349–366 show a composition bias toward low complexity; it reads MQAQMQQSQAQGEQSDVL.

This sequence belongs to the TRAFAC class TrmE-Era-EngA-EngB-Septin-like GTPase superfamily. Septin GTPase family. Septins polymerize into heterooligomeric protein complexes that form filaments, and can associate with cellular membranes, actin filaments and microtubules. GTPase activity is required for filament formation. Interacts with AURKB.

It localises to the cytoplasm. Its subcellular location is the cytoskeleton. It is found in the microtubule organizing center. The protein localises to the centrosome. The protein resides in the midbody. In terms of biological role, filament-forming cytoskeletal GTPase. May play a role in cytokinesis (Potential). In Mus musculus (Mouse), this protein is Septin-1.